The chain runs to 162 residues: Phosphopantetheine adenylyltransferase (162 aa).

Residue threonine 10 coordinates substrate. Residues 10–11 (TF) and histidine 18 contribute to the ATP site. Substrate is bound by residues lysine 42, methionine 74, and arginine 88. ATP is bound by residues 89 to 91 (GLR), glutamate 99, and 124 to 130 (YAFLSST).

It belongs to the bacterial CoaD family. As to quaternary structure, homohexamer. The cofactor is Mg(2+).

Its subcellular location is the cytoplasm. It catalyses the reaction (R)-4'-phosphopantetheine + ATP + H(+) = 3'-dephospho-CoA + diphosphate. The protein operates within cofactor biosynthesis; coenzyme A biosynthesis; CoA from (R)-pantothenate: step 4/5. In terms of biological role, reversibly transfers an adenylyl group from ATP to 4'-phosphopantetheine, yielding dephospho-CoA (dPCoA) and pyrophosphate. This is Phosphopantetheine adenylyltransferase from Aliivibrio salmonicida (strain LFI1238) (Vibrio salmonicida (strain LFI1238)).